Here is a 466-residue protein sequence, read N- to C-terminus: 55 kDa erythrocyte membrane protein (466 aa).

An N-acetylthreonine modification is found at Thr-2. Phosphoserine occurs at positions 13 and 19. Phosphothreonine is present on Thr-49. Residues Ser-52, Ser-57, and Ser-110 each carry the phosphoserine modification. Positions 71-152 (LIQFEKVTEE…MISLKVIPNQ (82 aa)) constitute a PDZ domain. Residues 158–228 (ALQMFMRAQF…PSPELQEWRV (71 aa)) form the SH3 domain. Phosphoserine is present on Ser-243. The segment at 268-466 (VVSYEEVVRL…PQWVPVSWVY (199 aa)) is interaction with PALS1. The Guanylate kinase-like domain occupies 282–451 (RKTLVLIGAS…TLKKLQEAFD (170 aa)).

This sequence belongs to the MAGUK family. As to quaternary structure, heterodimer with PALS1. Interacts with DLG5 and NF2. Interacts (via guanylate kinase-like domain) with WHRN (via third PDZ domain). Post-translationally, palmitoylated.

It is found in the cell membrane. Its subcellular location is the cell projection. The protein resides in the stereocilium. In terms of biological role, essential regulator of neutrophil polarity. Regulates neutrophil polarization by regulating AKT1 phosphorylation through a mechanism that is independent of PIK3CG activity. The sequence is that of 55 kDa erythrocyte membrane protein (MPP1) from Pongo abelii (Sumatran orangutan).